Reading from the N-terminus, the 240-residue chain is ATP synthase subunit a (240 aa).

The next 6 helical transmembrane spans lie at 41–61 (WLVM…LEII), 92–112 (FFPM…IGLI), 121–141 (SINT…VIGF), 152–172 (FIGP…ISNF), 191–211 (VLLG…PIMV), and 212–232 (LGVL…VVYF).

Belongs to the ATPase A chain family. As to quaternary structure, F-type ATPases have 2 components, CF(1) - the catalytic core - and CF(0) - the membrane proton channel. CF(1) has five subunits: alpha(3), beta(3), gamma(1), delta(1), epsilon(1). CF(0) has three main subunits: a(1), b(2) and c(9-12). The alpha and beta chains form an alternating ring which encloses part of the gamma chain. CF(1) is attached to CF(0) by a central stalk formed by the gamma and epsilon chains, while a peripheral stalk is formed by the delta and b chains.

The protein resides in the cell inner membrane. Key component of the proton channel; it plays a direct role in the translocation of protons across the membrane. The protein is ATP synthase subunit a of Desulfotalea psychrophila (strain LSv54 / DSM 12343).